Here is a 459-residue protein sequence, read N- to C-terminus: Bifunctional protein GlmU (459 aa).

A pyrophosphorylase region spans residues 1–230; sequence MTTRNTIILA…FDESMGVNDR (230 aa). Residues 9–12, Lys23, Gln73, 78–79, 101–103, Gly140, Glu155, Asn170, and Asn228 contribute to the UDP-N-acetyl-alpha-D-glucosamine site; these read LAAG, GT, and SGD. Mg(2+) is bound at residue Asp103. Asn228 serves as a coordination point for Mg(2+). Residues 231 to 251 are linker; the sequence is VALSAATKIMRDRINEAHMRD. The N-acetyltransferase stretch occupies residues 252 to 459; the sequence is GVTLIDPATT…YQKLPYRGED (208 aa). 2 residues coordinate UDP-N-acetyl-alpha-D-glucosamine: Arg333 and Lys351. His363 (proton acceptor) is an active-site residue. Residues Tyr366 and Asn377 each contribute to the UDP-N-acetyl-alpha-D-glucosamine site. Acetyl-CoA contacts are provided by residues 386–387, Ser405, Ala423, and Arg440; that span reads NY.

In the N-terminal section; belongs to the N-acetylglucosamine-1-phosphate uridyltransferase family. This sequence in the C-terminal section; belongs to the transferase hexapeptide repeat family. In terms of assembly, homotrimer. Mg(2+) is required as a cofactor.

It localises to the cytoplasm. The enzyme catalyses alpha-D-glucosamine 1-phosphate + acetyl-CoA = N-acetyl-alpha-D-glucosamine 1-phosphate + CoA + H(+). It catalyses the reaction N-acetyl-alpha-D-glucosamine 1-phosphate + UTP + H(+) = UDP-N-acetyl-alpha-D-glucosamine + diphosphate. It participates in nucleotide-sugar biosynthesis; UDP-N-acetyl-alpha-D-glucosamine biosynthesis; N-acetyl-alpha-D-glucosamine 1-phosphate from alpha-D-glucosamine 6-phosphate (route II): step 2/2. The protein operates within nucleotide-sugar biosynthesis; UDP-N-acetyl-alpha-D-glucosamine biosynthesis; UDP-N-acetyl-alpha-D-glucosamine from N-acetyl-alpha-D-glucosamine 1-phosphate: step 1/1. Its pathway is bacterial outer membrane biogenesis; LPS lipid A biosynthesis. Its function is as follows. Catalyzes the last two sequential reactions in the de novo biosynthetic pathway for UDP-N-acetylglucosamine (UDP-GlcNAc). The C-terminal domain catalyzes the transfer of acetyl group from acetyl coenzyme A to glucosamine-1-phosphate (GlcN-1-P) to produce N-acetylglucosamine-1-phosphate (GlcNAc-1-P), which is converted into UDP-GlcNAc by the transfer of uridine 5-monophosphate (from uridine 5-triphosphate), a reaction catalyzed by the N-terminal domain. The polypeptide is Bifunctional protein GlmU (Levilactobacillus brevis (strain ATCC 367 / BCRC 12310 / CIP 105137 / JCM 1170 / LMG 11437 / NCIMB 947 / NCTC 947) (Lactobacillus brevis)).